Reading from the N-terminus, the 305-residue chain is Syntaxin-112 (305 aa).

M1 is subject to N-acetylmethionine. A coiled-coil region spans residues 52-119 (QEIETIKTLI…TLIETLEKRN (68 aa)). The t-SNARE coiled-coil homology domain occupies 210–272 (DLKTKERHEA…SGGTNSLYYA (63 aa)).

The protein belongs to the syntaxin family. In terms of assembly, part of the t-SNARE complex.

Functionally, vesicle trafficking protein that functions in the secretory pathway. The polypeptide is Syntaxin-112 (SYP112) (Arabidopsis thaliana (Mouse-ear cress)).